The chain runs to 224 residues: Putative N-acetylmannosamine-6-phosphate 2-epimerase (224 aa).

This sequence belongs to the NanE family.

It catalyses the reaction an N-acyl-D-glucosamine 6-phosphate = an N-acyl-D-mannosamine 6-phosphate. It functions in the pathway amino-sugar metabolism; N-acetylneuraminate degradation; D-fructose 6-phosphate from N-acetylneuraminate: step 3/5. Functionally, converts N-acetylmannosamine-6-phosphate (ManNAc-6-P) to N-acetylglucosamine-6-phosphate (GlcNAc-6-P). This Staphylococcus carnosus (strain TM300) protein is Putative N-acetylmannosamine-6-phosphate 2-epimerase.